A 211-amino-acid chain; its full sequence is Protein-L-isoaspartate O-methyltransferase (211 aa).

Residue Ser-62 is part of the active site.

Belongs to the methyltransferase superfamily. L-isoaspartyl/D-aspartyl protein methyltransferase family.

Its subcellular location is the cytoplasm. The catalysed reaction is [protein]-L-isoaspartate + S-adenosyl-L-methionine = [protein]-L-isoaspartate alpha-methyl ester + S-adenosyl-L-homocysteine. Catalyzes the methyl esterification of L-isoaspartyl residues in peptides and proteins that result from spontaneous decomposition of normal L-aspartyl and L-asparaginyl residues. It plays a role in the repair and/or degradation of damaged proteins. The sequence is that of Protein-L-isoaspartate O-methyltransferase from Shewanella amazonensis (strain ATCC BAA-1098 / SB2B).